Consider the following 346-residue polypeptide: Heat-inducible transcription repressor HrcA (346 aa).

This sequence belongs to the HrcA family.

In terms of biological role, negative regulator of class I heat shock genes (grpE-dnaK-dnaJ and groELS operons). Prevents heat-shock induction of these operons. The protein is Heat-inducible transcription repressor HrcA of Fructilactobacillus sanfranciscensis (Lactobacillus sanfranciscensis).